The primary structure comprises 183 residues: Potassium-transporting ATPase KdpC subunit (183 aa).

The helical transmembrane segment at 11-31 threads the bilayer; the sequence is LILLLAVVTGALYPLAVTGVA.

Belongs to the KdpC family. The system is composed of three essential subunits: KdpA, KdpB and KdpC.

It is found in the cell inner membrane. Its function is as follows. Part of the high-affinity ATP-driven potassium transport (or Kdp) system, which catalyzes the hydrolysis of ATP coupled with the electrogenic transport of potassium into the cytoplasm. This subunit acts as a catalytic chaperone that increases the ATP-binding affinity of the ATP-hydrolyzing subunit KdpB by the formation of a transient KdpB/KdpC/ATP ternary complex. The sequence is that of Potassium-transporting ATPase KdpC subunit from Pseudomonas putida (strain W619).